Consider the following 1079-residue polypeptide: Translation initiation factor IF-2 (1079 aa).

Composition is skewed to basic and acidic residues over residues 52–65, 75–90, and 102–134; these read VQAQ…KEGN, RDGD…KAPE, and APER…KEPQ. The disordered stretch occupies residues 52-488; that stretch reads VQAQRDGGAR…RGKKDVRPAA (437 aa). Residues 150-184 show a composition bias toward low complexity; that stretch reads APVAKVVEAAPAETPAPEAPAVKATVTAEAAPAKT. Over residues 185–194 the composition is skewed to basic and acidic residues; the sequence is VEPESERPQA. Over residues 276 to 291 the composition is skewed to low complexity; sequence AAVAQQQMQQQAAQQQ. Over residues 306–327 the composition is skewed to basic and acidic residues; it reads GGYRPEGQREGGYRPEGQREGG. Composition is skewed to low complexity over residues 348–370 and 380–398; these read EGGY…GPRP and PGAP…APRP. Positions 419-429 are enriched in gly residues; sequence PRPGGFGGAPG. Residues 461 to 471 show a composition bias toward basic and acidic residues; sequence PRGRSDDDVMR. Basic residues predominate over residues 473–482; that stretch reads PRGRGKRGKK. The tr-type G domain occupies 578-745; it reads TRPPVVTIMG…LIAIQAEILE (168 aa). The tract at residues 587-594 is G1; the sequence is GHVDHGKT. GTP is bound at residue 587-594; the sequence is GHVDHGKT. A G2 region spans residues 612–616; the sequence is GITQH. The G3 stretch occupies residues 633–636; the sequence is DTPG. GTP-binding positions include 633-637 and 687-690; these read DTPGH and NKMD. Residues 687–690 form a G4 region; that stretch reads NKMD. Positions 723–725 are G5; the sequence is SAK.

The protein belongs to the TRAFAC class translation factor GTPase superfamily. Classic translation factor GTPase family. IF-2 subfamily.

It is found in the cytoplasm. One of the essential components for the initiation of protein synthesis. Protects formylmethionyl-tRNA from spontaneous hydrolysis and promotes its binding to the 30S ribosomal subunits. Also involved in the hydrolysis of GTP during the formation of the 70S ribosomal complex. This chain is Translation initiation factor IF-2, found in Nitratidesulfovibrio vulgaris (strain ATCC 29579 / DSM 644 / CCUG 34227 / NCIMB 8303 / VKM B-1760 / Hildenborough) (Desulfovibrio vulgaris).